The primary structure comprises 368 residues: Abasic site processing protein YMR114C (368 aa).

Cys-2 acts as the Nucleophile in catalysis. Cys-2 carries the post-translational modification Thiazolidine linkage to a ring-opened DNA abasic site. The segment at 25–48 (VNTPKDASSNSQHPHDEEDTKDQP) is disordered. The segment covering 37 to 46 (HPHDEEDTKD) has biased composition (basic and acidic residues). Glu-132 is a catalytic residue. A disordered region spans residues 270–368 (LENDNEQGID…DSRGKKKIKK (99 aa)). 3 stretches are compositionally biased toward basic and acidic residues: residues 281–296 (RGVK…DVFN), 304–313 (NSYDGLKKNE), and 326–349 (IGDR…EKRN). The residue at position 338 (Ser-338) is a Phosphoserine.

It belongs to the SOS response-associated peptidase family.

It is found in the chromosome. Its activity is regulated as follows. Formation and reversal of DNA-protein cross-link depends on DNA context. Catalyzes formation of the thiazolidine linkage in presence of abasic sites in single-stranded DNA. Mediates the reversal of the thiazolidine cross-link in presence of double stranded DNA. Its function is as follows. Sensor of abasic sites in single-stranded DNA (ssDNA) required to preserve genome integrity by promoting error-free repair of abasic sites. Recognizes and binds abasic sites in ssDNA at replication forks and chemically modifies the lesion by forming a covalent cross-link with DNA: forms a stable thiazolidine linkage between a ring-opened abasic site and the alpha-amino and sulfhydryl substituents of its N-terminal catalytic cysteine residue. The DNA-protein cross-link is then reversed: able to catalyze the reversal of the thiazolidine cross-link and cycle between a cross-link and a non-cross-linked state depending on DNA context: mediates self-reversal of the thiazolidine cross-link in double stranded DNA. Acts as a protease: mediates autocatalytic processing of its N-terminal methionine in order to expose the catalytic cysteine. The chain is Abasic site processing protein YMR114C from Saccharomyces cerevisiae (strain ATCC 204508 / S288c) (Baker's yeast).